A 258-amino-acid chain; its full sequence is MLAIISPAKTLDFESAVKNFPVSQPHFTDYSEQLIEVCRKLSPQDLSSLMSISDKLAGLNAARFAEWTKIHNENNSRPALFAFKGDVYTGLDADSLSEDDVIFAQSHLRMLSGLYGLLKPLDLMQPYRLEMGTKLANPKGKDLYAFWGNVITQAVQQAIDEQGDNVLVNLASDEYYKSVKESQINAKIIKPVFLDNKNGKYKVISFYAKKARGLMCRYIIQHHLTEIEQLKEFDLGGYWFDSASSTETEFVFKRDINE.

The protein belongs to the UPF0246 family.

The sequence is that of UPF0246 protein HI_0984 from Haemophilus influenzae (strain ATCC 51907 / DSM 11121 / KW20 / Rd).